The chain runs to 488 residues: MRKKLAKVKVHIQSLDSLLSSMTMPIIGIFIAWGLLASFFIPSGWTPDKNLALMVGIGIQYVIPTIIXFFGGKKIYEIRGGVIAVIIAIAVIAAGQTEAFTKIVGQKSVMFLGVMIFGPIAALILKHTEKFWIHRIKSGFEMLVNNFYLGFLGFALIFPSFYLSIYLIGYIQLGLKLLVEIMQQYKLYPIAAIVIEPAKVLFLNNAINHGVLTPLGLQQVRDSGKSILFLLESNPGPGLGLLVAFLIFFFKRDKKLSSNAASSSPIHLFGGIHEVYFPFVLLKPVLILATIAVGVVGNGILQIFNAGTIAPVSPGSVIAGFLQINKTPLDVAGYALALVLSAVTSLLISLLLLSLTRKKQLKTLQEAQAQVAEMKQTPAKKPRQKDTPAIATKIDFSQVTFVCDAGMGSSTMGAAIFRKELKNQNIEDITVINKAIVDLKDEKVIITISQLYDRVKAKRADATIYTINQFLDKQGYLTIIEKIKNEKN.

Residues 1–26 are Cytoplasmic-facing; the sequence is MRKKLAKVKVHIQSLDSLLSSMTMPI. Residues 15 to 362 enclose the PTS EIIC type-2 domain; it reads LDSLLSSMTM…LSLTRKKQLK (348 aa). The chain crosses the membrane as a helical span at residues 27-48; that stretch reads IGIFIAWGLLASFFIPSGWTPD. Residues 49–52 lie on the Extracellular side of the membrane; sequence KNLA. Residues 53 to 73 traverse the membrane as a helical segment; the sequence is LMVGIGIQYVIPTIIXFFGGK. Residues 74-147 lie on the Cytoplasmic side of the membrane; sequence KIYEIRGGVI…SGFEMLVNNF (74 aa). Residues 148 to 169 form a helical membrane-spanning segment; that stretch reads YLGFLGFALIFPSFYLSIYLIG. Residues 170–178 are Extracellular-facing; sequence YIQLGLKLL. Residues 179 to 199 form a helical membrane-spanning segment; it reads VEIMQQYKLYPIAAIVIEPAK. The Cytoplasmic portion of the chain corresponds to 200 to 289; sequence VLFLNNAINH…VLLKPVLILA (90 aa). Residues 290–309 form a helical membrane-spanning segment; that stretch reads TIAVGVVGNGILQIFNAGTI. Topologically, residues 310 to 331 are extracellular; sequence APVSPGSVIAGFLQINKTPLDV. A helical transmembrane segment spans residues 332-353; that stretch reads AGYALALVLSAVTSLLISLLLL. The Cytoplasmic portion of the chain corresponds to 354–488; sequence SLTRKKQLKT…IIEKIKNEKN (135 aa). The PTS EIIB type-2 domain maps to 397–488; the sequence is SQVTFVCDAG…IIEKIKNEKN (92 aa). Cys403 (phosphocysteine intermediate; for EIIB activity) is an active-site residue. Phosphocysteine; by EIIA is present on Cys403.

In terms of assembly, homodimer.

The protein resides in the cell membrane. The enzyme catalyses D-mannitol(out) + N(pros)-phospho-L-histidyl-[protein] = D-mannitol 1-phosphate(in) + L-histidyl-[protein]. Its function is as follows. The phosphoenolpyruvate-dependent sugar phosphotransferase system (sugar PTS), a major carbohydrate active transport system, catalyzes the phosphorylation of incoming sugar substrates concomitantly with their translocation across the cell membrane. The enzyme II CmtAB PTS system is involved in D-mannitol transport. This chain is PTS system mannitol-specific EIICB component (mtlA), found in Mycoplasma pneumoniae (strain ATCC 29342 / M129 / Subtype 1) (Mycoplasmoides pneumoniae).